A 433-amino-acid polypeptide reads, in one-letter code: Amino-acid acetyltransferase (433 aa).

Residues Glu-287–Ser-426 enclose the N-acetyltransferase domain.

The protein belongs to the acetyltransferase family. ArgA subfamily.

Its subcellular location is the cytoplasm. It carries out the reaction L-glutamate + acetyl-CoA = N-acetyl-L-glutamate + CoA + H(+). It participates in amino-acid biosynthesis; L-arginine biosynthesis; N(2)-acetyl-L-ornithine from L-glutamate: step 1/4. The chain is Amino-acid acetyltransferase from Pseudomonas fluorescens (strain SBW25).